The chain runs to 409 residues: Glutamate--tRNA ligase 2 (409 aa).

The short motif at 9 to 19 (PSPTGNLHIGG) is the 'HIGH' region element. A 'KMSKS' region motif is present at residues 198 to 202 (KLSKR). Lys201 lines the ATP pocket.

It belongs to the class-I aminoacyl-tRNA synthetase family. Glutamate--tRNA ligase type 1 subfamily. In terms of assembly, monomer.

The protein localises to the cytoplasm. The catalysed reaction is tRNA(Glu) + L-glutamate + ATP = L-glutamyl-tRNA(Glu) + AMP + diphosphate. Its function is as follows. Catalyzes the attachment of glutamate to tRNA(Glu) in a two-step reaction: glutamate is first activated by ATP to form Glu-AMP and then transferred to the acceptor end of tRNA(Glu). The sequence is that of Glutamate--tRNA ligase 2 from Neorickettsia sennetsu (strain ATCC VR-367 / Miyayama) (Ehrlichia sennetsu).